The primary structure comprises 358 residues: MTLPNDLLETLVKRKESPQANKVWPVTTFSLARNLSVSKFLPCLSKEQKLEILQFITSHFNHIEGFGEFIVLPLKDTPLWQKEFLLEHFLLPYDLVGNPEGEALVVSRSGDFLAAINFQDHLVLHGIDFQGNVEKTLDQLVQLDSYLHSKLSFAFSSEFGFLTTNPKNCGTGLKSQCFLHIPALLYSKEFTNLIDEEVEIITSSLLLGVTGFPGNIVVLSNRCSLGLTEELLLSSLRITASKLSVAEVAAKKRLSEENSGDLKNLILRSLGLLTHSCQLELKETLDALSWIQLGIDLGLIKVTENHPLWNPLFWQIRRAHLALQKQAEDSRDLQKDTISHLRASVLKELTKGLSPESF.

The Phosphagen kinase C-terminal domain occupies 23–250; sequence VWPVTTFSLA…SKLSVAEVAA (228 aa). ATP contacts are provided by residues 26 to 30, 174 to 178, and 203 to 208; these read VTTFS, KSQCF, and SSLLLG.

The protein belongs to the ATP:guanido phosphotransferase family.

The enzyme catalyses L-arginyl-[protein] + ATP = N(omega)-phospho-L-arginyl-[protein] + ADP + H(+). Functionally, catalyzes the specific phosphorylation of arginine residues in proteins. This chain is Protein-arginine kinase, found in Chlamydia pneumoniae (Chlamydophila pneumoniae).